The chain runs to 101 residues: Small ribosomal subunit protein uS14 (101 aa).

Belongs to the universal ribosomal protein uS14 family. Part of the 30S ribosomal subunit. Contacts proteins S3 and S10.

Binds 16S rRNA, required for the assembly of 30S particles and may also be responsible for determining the conformation of the 16S rRNA at the A site. The sequence is that of Small ribosomal subunit protein uS14 from Paraburkholderia phytofirmans (strain DSM 17436 / LMG 22146 / PsJN) (Burkholderia phytofirmans).